Consider the following 315-residue polypeptide: Transaldolase (315 aa).

The active-site Schiff-base intermediate with substrate is the Lys131.

It belongs to the transaldolase family. Type 1 subfamily. As to quaternary structure, homodimer.

Its subcellular location is the cytoplasm. It carries out the reaction D-sedoheptulose 7-phosphate + D-glyceraldehyde 3-phosphate = D-erythrose 4-phosphate + beta-D-fructose 6-phosphate. It functions in the pathway carbohydrate degradation; pentose phosphate pathway; D-glyceraldehyde 3-phosphate and beta-D-fructose 6-phosphate from D-ribose 5-phosphate and D-xylulose 5-phosphate (non-oxidative stage): step 2/3. Functionally, transaldolase is important for the balance of metabolites in the pentose-phosphate pathway. The chain is Transaldolase from Haemophilus ducreyi (strain 35000HP / ATCC 700724).